Consider the following 221-residue polypeptide: Hydrogenase expression/formation protein HupD (221 aa).

Ni(2+)-binding residues include glutamate 20, aspartate 66, and histidine 97.

Belongs to the peptidase A31 family.

Not known. Could be involved in the processing of hydrogenase. The chain is Hydrogenase expression/formation protein HupD (hupD) from Thiocapsa roseopersicina.